We begin with the raw amino-acid sequence, 513 residues long: Alanine--glyoxylate aminotransferase 2, mitochondrial (513 aa).

The transit peptide at 1–40 directs the protein to the mitochondrion; sequence MSLAWRNLQKPFYLETSLRILQMRPSLSLGASRIAVPKLT. An N6-acetyllysine modification is found at K56. K70 carries the post-translational modification N6-acetyllysine; alternate. The residue at position 70 (K70) is an N6-succinyllysine; alternate. At K83 the chain carries N6-acetyllysine. N6-acetyllysine; alternate is present on K261. Position 261 is an N6-succinyllysine; alternate (K261). K303 is modified (N6-succinyllysine). K349 is subject to N6-(pyridoxal phosphate)lysine. An N6-acetyllysine; alternate mark is found at K416 and K419. N6-succinyllysine; alternate is present on residues K416 and K419. An N6-acetyllysine modification is found at K453.

This sequence belongs to the class-III pyridoxal-phosphate-dependent aminotransferase family. As to quaternary structure, homotetramer. The cofactor is pyridoxal 5'-phosphate. In terms of tissue distribution, expressed in the liver and kidney.

It localises to the mitochondrion. It catalyses the reaction glyoxylate + L-alanine = glycine + pyruvate. The catalysed reaction is (R)-3-amino-2-methylpropanoate + pyruvate = 2-methyl-3-oxopropanoate + L-alanine. The enzyme catalyses 3-oxopropanoate + L-alanine = beta-alanine + pyruvate. It carries out the reaction 2-oxobutanoate + L-alanine = (2S)-2-aminobutanoate + pyruvate. It catalyses the reaction N(omega),N(omega)-dimethyl-L-arginine + pyruvate = 5-(3,3-dimethylguanidino)-2-oxopentanoate + L-alanine. The catalysed reaction is N(omega),N('omega)-dimethyl-L-arginine + pyruvate = 5-(3,3'-dimethylguanidino)-2-oxopentanoate + L-alanine. The enzyme catalyses N(omega),N(omega)-dimethyl-L-arginine + glyoxylate = 5-(3,3-dimethylguanidino)-2-oxopentanoate + glycine. It carries out the reaction N(omega),N('omega)-dimethyl-L-arginine + glyoxylate = 5-(3,3'-dimethylguanidino)-2-oxopentanoate + glycine. It catalyses the reaction N(omega)-methyl-L-arginine + pyruvate = 5-(3-methylguanidino)-2-oxopentanoate + L-alanine. The catalysed reaction is N(omega)-methyl-L-arginine + glyoxylate = 5-(3-methylguanidino)-2-oxopentanoate + glycine. The enzyme catalyses L-ornithine + pyruvate = 5-amino-2-oxopentanoate + L-alanine. It carries out the reaction L-ornithine + glyoxylate = 5-amino-2-oxopentanoate + glycine. It catalyses the reaction (2S)-2-aminobutanoate + glyoxylate = 2-oxobutanoate + glycine. The catalysed reaction is N(omega),N(omega)-dimethyl-L-arginine + oxaloacetate = 5-(3,3-dimethylguanidino)-2-oxopentanoate + L-aspartate. The enzyme catalyses oxaloacetate + L-alanine = L-aspartate + pyruvate. It carries out the reaction N(omega),N(omega)-dimethyl-L-arginine + 2-oxobutanoate = 5-(3,3-dimethylguanidino)-2-oxopentanoate + (2S)-2-aminobutanoate. It catalyses the reaction 2-oxopentanoate + N(omega),N(omega)-dimethyl-L-arginine = 5-(3,3-dimethylguanidino)-2-oxopentanoate + L-2-aminopentanoate. The catalysed reaction is 2-oxohexanoate + N(omega),N(omega)-dimethyl-L-arginine = L-2-aminohexanoate + 5-(3,3-dimethylguanidino)-2-oxopentanoate. (R)-3-amino-2-methylpropionate--pyruvate transaminase and beta-alanine-pyruvate aminotransferase are inhibited by aminooxyacetic acid. Its function is as follows. Multifunctional aminotransferase with a broad substrate specificity. Catalyzes the conversion of glyoxylate to glycine using alanine as the amino donor. Catalyzes metabolism of not L- but the D-isomer of D-beta-aminoisobutyric acid to generate 2-methyl-3-oxopropanoate and alanine. Catalyzes the transfer of the amino group from beta-alanine to pyruvate to yield L-alanine and 3-oxopropanoate. Can metabolize NG-monomethyl-L-arginine (NMMA), asymmetric NG,NG-dimethyl-L-arginine (ADMA) and symmetric NG,N'G-dimethyl-L-arginine (SDMA). ADMA is a potent inhibitor of nitric-oxide (NO) synthase, and this activity provides mechanism through which the kidney regulates blood pressure. The chain is Alanine--glyoxylate aminotransferase 2, mitochondrial (Agxt2) from Mus musculus (Mouse).